The chain runs to 1181 residues: Clustered mitochondria protein homolog (1181 aa).

The disordered stretch occupies residues 165–195 (AKAEALAKNEEVSEDEESEPEDDTPMKQSTQ). Positions 176–187 (VSEDEESEPEDD) are enriched in acidic residues. The 244-residue stretch at 379 to 622 (DMARNQELLS…RLAPVDIAFL (244 aa)) folds into the Clu domain. Positions 1130–1181 (GRLARQAPKPTATHQKEAPKKASKKTKGKGKGKDDKGEKLVAELKKKKAGKR) are disordered. Over residues 1150-1159 (KASKKTKGKG) the composition is skewed to basic residues. Basic and acidic residues predominate over residues 1160-1173 (KGKDDKGEKLVAEL).

The protein belongs to the CLU family. In terms of assembly, may associate with the eukaryotic translation initiation factor 3 (eIF-3) complex.

It is found in the cytoplasm. Functionally, mRNA-binding protein involved in proper cytoplasmic distribution of mitochondria. The polypeptide is Clustered mitochondria protein homolog (Yarrowia lipolytica (strain CLIB 122 / E 150) (Yeast)).